Consider the following 978-residue polypeptide: Glycine dehydrogenase (decarboxylating) (978 aa).

K726 is modified (N6-(pyridoxal phosphate)lysine).

It belongs to the GcvP family. In terms of assembly, the glycine cleavage system is composed of four proteins: P, T, L and H. The cofactor is pyridoxal 5'-phosphate.

The catalysed reaction is N(6)-[(R)-lipoyl]-L-lysyl-[glycine-cleavage complex H protein] + glycine + H(+) = N(6)-[(R)-S(8)-aminomethyldihydrolipoyl]-L-lysyl-[glycine-cleavage complex H protein] + CO2. Functionally, the glycine cleavage system catalyzes the degradation of glycine. The P protein binds the alpha-amino group of glycine through its pyridoxal phosphate cofactor; CO(2) is released and the remaining methylamine moiety is then transferred to the lipoamide cofactor of the H protein. The protein is Glycine dehydrogenase (decarboxylating) of Paraburkholderia phytofirmans (strain DSM 17436 / LMG 22146 / PsJN) (Burkholderia phytofirmans).